The primary structure comprises 115 residues: MNAIVILFINATLSLGLITVAFWLPHLNIYAEKAGAYECGFDPMSSARLPFSMKFFLIGITFLLFDLEITLLLPLPWAMHSTNTYFTMLVSFLLVSVLALGLMYEWTNKGLEWTE.

The next 3 helical transmembrane spans lie at 4–24 (IVILFINATLSLGLITVAFWL), 55–75 (FFLIGITFLLFDLEITLLLPL), and 84–104 (TYFTMLVSFLLVSVLALGLMY).

This sequence belongs to the complex I subunit 3 family. In terms of assembly, core subunit of respiratory chain NADH dehydrogenase (Complex I) which is composed of 45 different subunits. Interacts with TMEM186. Interacts with TMEM242.

Its subcellular location is the mitochondrion inner membrane. It carries out the reaction a ubiquinone + NADH + 5 H(+)(in) = a ubiquinol + NAD(+) + 4 H(+)(out). Its function is as follows. Core subunit of the mitochondrial membrane respiratory chain NADH dehydrogenase (Complex I) which catalyzes electron transfer from NADH through the respiratory chain, using ubiquinone as an electron acceptor. Essential for the catalytic activity of complex I. In Eligmodontia typus (Highland gerbil mouse), this protein is NADH-ubiquinone oxidoreductase chain 3.